Reading from the N-terminus, the 161-residue chain is Troponin C, slow skeletal and cardiac muscles (161 aa).

N-acetylmethionine is present on M1. EF-hand domains are found at residues 16-51, 52-87, 92-127, and 128-161; these read QKNE…LGQN, PTPE…CMKD, KSEE…TGET, and ITED…KGVE. Residues D65, D67, S69, T71, and E76 each coordinate Ca(2+). The residue at position 98 (S98) is a Phosphoserine. D105, N107, D109, Y111, E116, D141, N143, D145, R147, and E152 together coordinate Ca(2+).

Belongs to the troponin C family.

Functionally, troponin is the central regulatory protein of striated muscle contraction. Tn consists of three components: Tn-I which is the inhibitor of actomyosin ATPase, Tn-T which contains the binding site for tropomyosin and Tn-C. The binding of calcium to Tn-C abolishes the inhibitory action of Tn on actin filaments. The sequence is that of Troponin C, slow skeletal and cardiac muscles (TNNC1) from Homo sapiens (Human).